The chain runs to 318 residues: sn-1 stearoyl-lipid 9-desaturase (318 aa).

A run of 2 helical transmembrane segments spans residues 56–76 and 80–100; these read VIFF…PQFF and AVGM…TLGF. The short motif at 101–106 is the Histidine box-1 element; the sequence is HRCISH. A helical membrane pass occupies residues 117–137; the sequence is YIFVICGTLACQGGVFEWVGL. The short motif at 138-142 is the Histidine box-2 element; sequence HRMHH. Residues 201-221 traverse the membrane as a helical segment; it reads VALGLILFALGGWPFVIWGIF. Positions 271–275 match the Histidine box-3 motif; it reads HHAYQ.

Belongs to the fatty acid desaturase type 2 family. Fe(2+) serves as cofactor.

It localises to the cellular thylakoid membrane. It catalyses the reaction a 1-octadecanoyl 2-acyl-glycerolipid + 2 reduced [2Fe-2S]-[ferredoxin] + O2 + 2 H(+) = a 1-[(9Z)-octadecenoyl]-2-acyl-glycerolipid + 2 oxidized [2Fe-2S]-[ferredoxin] + 2 H2O. The protein operates within lipid metabolism; polyunsaturated fatty acid biosynthesis. Desaturase involved in fatty acid biosynthesis. Introduces a double bond at carbon 9 of stearoyl groups (18:0) attached to the sn-1 position of the glycerol moiety of membrane glycerolipids. Does not desaturate palmitic acid (16:0), palmitoleic acid (16:1) and cis-vaccenic acid (18:1). This Synechocystis sp. (strain ATCC 27184 / PCC 6803 / Kazusa) protein is sn-1 stearoyl-lipid 9-desaturase.